Consider the following 984-residue polypeptide: Putative formate dehydrogenase SAV2309 (984 aa).

The 2Fe-2S ferredoxin-type domain maps to 3–79 (EHLVVTLDGK…PMTVNTVNND (77 aa)). Residues cysteine 37, cysteine 48, cysteine 51, and cysteine 63 each coordinate [2Fe-2S] cluster. The 4Fe-4S His(Cys)3-ligated-type domain maps to 79 to 119 (DVKDAQKEALDRILEKHMLYCTVCDYNNGDCEIHNTMDAWG). The [4Fe-4S] cluster site is built by histidine 95, cysteine 99, cysteine 102, cysteine 109, cysteine 147, cysteine 150, cysteine 153, cysteine 157, cysteine 190, cysteine 193, cysteine 196, cysteine 200, cysteine 264, cysteine 267, cysteine 271, and cysteine 299. 2 consecutive 4Fe-4S ferredoxin-type domains span residues 138–165 (PFYR…VNET) and 181–211 (NDVP…VNME). The interval 252 to 984 (MRKERIKKTK…YVFPGNQVDK (733 aa)) is formate dehydrogenase. Residues 257–313 (IKKTKTVCTYCGVGCSFEVWTKDREILKVQPSHDSPANKIVTCVKGKFSWGHINSDQ) form the 4Fe-4S Mo/W bis-MGD-type domain.

In the C-terminal section; belongs to the prokaryotic molybdopterin-containing oxidoreductase family. [2Fe-2S] cluster serves as cofactor. It depends on [4Fe-4S] cluster as a cofactor. The cofactor is Mo-bis(molybdopterin guanine dinucleotide).

The catalysed reaction is formate + NAD(+) = CO2 + NADH. In Staphylococcus aureus (strain Mu50 / ATCC 700699), this protein is Putative formate dehydrogenase SAV2309.